The primary structure comprises 418 residues: UDP-N-acetylglucosamine 1-carboxyvinyltransferase (418 aa).

22-23 (KN) contributes to the phosphoenolpyruvate binding site. UDP-N-acetyl-alpha-D-glucosamine is bound at residue Arg-93. The Proton donor role is filled by Cys-117. Cys-117 is modified (2-(S-cysteinyl)pyruvic acid O-phosphothioketal). The UDP-N-acetyl-alpha-D-glucosamine site is built by Asp-306 and Ile-328.

Belongs to the EPSP synthase family. MurA subfamily.

It is found in the cytoplasm. The catalysed reaction is phosphoenolpyruvate + UDP-N-acetyl-alpha-D-glucosamine = UDP-N-acetyl-3-O-(1-carboxyvinyl)-alpha-D-glucosamine + phosphate. Its pathway is cell wall biogenesis; peptidoglycan biosynthesis. Functionally, cell wall formation. Adds enolpyruvyl to UDP-N-acetylglucosamine. This Hydrogenovibrio crunogenus (strain DSM 25203 / XCL-2) (Thiomicrospira crunogena) protein is UDP-N-acetylglucosamine 1-carboxyvinyltransferase.